The following is a 330-amino-acid chain: Ketol-acid reductoisomerase (NADP(+)) (330 aa).

Positions 2–182 constitute a KARI N-terminal Rossmann domain; sequence ARMYYDADAN…GGTRAGILET (181 aa). Residues 25-28, Ser-51, Ser-53, and 83-86 each bind NADP(+); these read YGSQ and DEFQ. The active site involves His-108. An NADP(+)-binding site is contributed by Gly-134. One can recognise a KARI C-terminal knotted domain in the interval 183-328; it reads SFREETETDL…KDLRAMFSWL (146 aa). Asp-191, Glu-195, Glu-227, and Glu-231 together coordinate Mg(2+). A substrate-binding site is contributed by Ser-252.

Belongs to the ketol-acid reductoisomerase family. Requires Mg(2+) as cofactor.

The enzyme catalyses (2R)-2,3-dihydroxy-3-methylbutanoate + NADP(+) = (2S)-2-acetolactate + NADPH + H(+). It catalyses the reaction (2R,3R)-2,3-dihydroxy-3-methylpentanoate + NADP(+) = (S)-2-ethyl-2-hydroxy-3-oxobutanoate + NADPH + H(+). It functions in the pathway amino-acid biosynthesis; L-isoleucine biosynthesis; L-isoleucine from 2-oxobutanoate: step 2/4. Its pathway is amino-acid biosynthesis; L-valine biosynthesis; L-valine from pyruvate: step 2/4. Functionally, involved in the biosynthesis of branched-chain amino acids (BCAA). Catalyzes an alkyl-migration followed by a ketol-acid reduction of (S)-2-acetolactate (S2AL) to yield (R)-2,3-dihydroxy-isovalerate. In the isomerase reaction, S2AL is rearranged via a Mg-dependent methyl migration to produce 3-hydroxy-3-methyl-2-ketobutyrate (HMKB). In the reductase reaction, this 2-ketoacid undergoes a metal-dependent reduction by NADPH to yield (R)-2,3-dihydroxy-isovalerate. The chain is Ketol-acid reductoisomerase (NADP(+)) from Synechococcus elongatus (strain ATCC 33912 / PCC 7942 / FACHB-805) (Anacystis nidulans R2).